A 193-amino-acid polypeptide reads, in one-letter code: Putative manganese efflux pump MntP (193 aa).

6 helical membrane-spanning segments follow: residues 3–23 (PLSI…AAIG), 37–57 (VRAG…GWML), 66–86 (AAFD…HMIV), 109–131 (LALA…SLAF), 146–166 (CTLS…ALIG), and 171–191 (ILGG…HLSG).

This sequence belongs to the MntP (TC 9.B.29) family.

The protein localises to the cell inner membrane. Probably functions as a manganese efflux pump. This Xanthomonas campestris pv. campestris (strain 8004) protein is Putative manganese efflux pump MntP.